Reading from the N-terminus, the 347-residue chain is Mitochondrial carrier protein rim2 (347 aa).

3 Solcar repeats span residues 32-136 (PPPL…GKRI), 146-234 (ENSQ…FKHA), and 256-345 (LDWG…IMHF). Helical transmembrane passes span 38–58 (FIAG…LDVV), 105–125 (TRAL…ARSI), 152–172 (LMAA…IWLV), 214–233 (SLLG…KFKH), 262–282 (LGGA…HEVV), and 317–338 (LYGG…LFGS).

It localises to the mitochondrion inner membrane. It carries out the reaction 5-methyl-UTP(out) + UTP(in) = 5-methyl-UTP(in) + UTP(out). Functionally, mitochondrial transporter that imports/exports pyrimidine nucleotides into and from mitochondria. Selectively transports uridine, thymidine, and cytosine (deoxy)nucleoside di- and triphosphates by an antiport mechanism. Also transports, with lower efficiency, uridine, thymidine, and cytosine (deoxy)nucleoside monophosphates as well as guanosine (deoxy)nucleoside di- and triphosphate. May import (deoxy)nucleoside triphosphates in exchange for intramitochondrial (deoxy)nucleoside monophosphates, thus providing precursors necessary for de novo synthesis of mitochondrial DNA and RNA while exporting products of their catabolism. Mediates the transport of iron and other divalent metal ions like copper and zinc across the mitochondrial inner membrane in a pyrimidine nucleotide-dependent fashion. Catalyzes the co-import of pyrimidine nucleotides and divalent metal ions including ferrous iron. Participates in mitochondrial genome maintenance, regulation of mitochondrial membrane potential and mitochondrial respiration. The polypeptide is Mitochondrial carrier protein rim2 (rim2) (Schizosaccharomyces pombe (strain 972 / ATCC 24843) (Fission yeast)).